The following is a 715-amino-acid chain: 1,4-alpha-glucan branching enzyme GlgB (715 aa).

Catalysis depends on aspartate 396, which acts as the Nucleophile. The active-site Proton donor is glutamate 449.

Belongs to the glycosyl hydrolase 13 family. GlgB subfamily. In terms of assembly, monomer.

It catalyses the reaction Transfers a segment of a (1-&gt;4)-alpha-D-glucan chain to a primary hydroxy group in a similar glucan chain.. It participates in glycan biosynthesis; glycogen biosynthesis. Its function is as follows. Catalyzes the formation of the alpha-1,6-glucosidic linkages in glycogen by scission of a 1,4-alpha-linked oligosaccharide from growing alpha-1,4-glucan chains and the subsequent attachment of the oligosaccharide to the alpha-1,6 position. The chain is 1,4-alpha-glucan branching enzyme GlgB from Vibrio vulnificus (strain YJ016).